A 1224-amino-acid polypeptide reads, in one-letter code: DNA-directed RNA polymerase subunit beta (1224 aa).

This sequence belongs to the RNA polymerase beta chain family. As to quaternary structure, the RNAP catalytic core consists of 2 alpha, 1 beta, 1 beta' and 1 omega subunit. When a sigma factor is associated with the core the holoenzyme is formed, which can initiate transcription.

It catalyses the reaction RNA(n) + a ribonucleoside 5'-triphosphate = RNA(n+1) + diphosphate. Its function is as follows. DNA-dependent RNA polymerase catalyzes the transcription of DNA into RNA using the four ribonucleoside triphosphates as substrates. This is DNA-directed RNA polymerase subunit beta from Pelotomaculum thermopropionicum (strain DSM 13744 / JCM 10971 / SI).